A 652-amino-acid chain; its full sequence is uncharacterized protein (652 aa).

The span at 1 to 13 (MSVTESKAKTERK) shows a compositional bias: basic and acidic residues. Residues 1–21 (MSVTESKAKTERKSSRKPAKT) form a disordered region.

Belongs to the ParB family.

This is an uncharacterized protein from Escherichia coli (strain K12).